A 180-amino-acid polypeptide reads, in one-letter code: uncharacterized protein (180 aa).

To H.influenzae HI_0656.1.

This is an uncharacterized protein from Escherichia coli (strain K12).